Consider the following 305-residue polypeptide: LysM and putative peptidoglycan-binding domain-containing protein 3 (305 aa).

Residues 1–216 (MAGRNQNRTV…PYYGADWGIG (216 aa)) lie on the Extracellular side of the membrane. N-linked (GlcNAc...) asparagine glycosylation is found at Asn-7 and Asn-26. Residue Ser-55 is modified to Phosphoserine. In terms of domain architecture, LysM spans 65–109 (LTKDIQEGDTLNAVALQYCCTVADIKRVNNLISDQDFFALRSIKI). Asn-199 is a glycosylation site (N-linked (GlcNAc...) asparagine). A helical transmembrane segment spans residues 217–237 (WWTAVVIMLIVGIITPVFYLL). Topologically, residues 238-305 (YYEILAKVDV…PQAHDAQHKT (68 aa)) are cytoplasmic. The disordered stretch occupies residues 253–305 (VGSSHLHPGLTPPTQHREMENEIGPTKGIPVGQQDDHKLYRQDPQAHDAQHKT). Over residues 286-305 (QDDHKLYRQDPQAHDAQHKT) the composition is skewed to basic and acidic residues.

It localises to the cell membrane. Its subcellular location is the golgi apparatus. In terms of biological role, essential for Golgi structural integrity. The chain is LysM and putative peptidoglycan-binding domain-containing protein 3 (Lysmd3) from Mus musculus (Mouse).